The following is a 371-amino-acid chain: Cytochrome b (371 aa).

The next 4 helical transmembrane spans lie at Phe-24 to Leu-44, Trp-68 to Ile-89, Trp-104 to Leu-124, and Phe-169 to Val-189. Positions 74 and 88 each coordinate heme b. The heme b site is built by His-173 and His-187. Residue His-192 participates in a ubiquinone binding. 4 consecutive transmembrane segments (helical) span residues Tyr-217–Ala-237, Leu-279–His-299, Leu-311–Thr-331, and Phe-338–Pro-357.

The protein belongs to the cytochrome b family. In terms of assembly, the cytochrome bc1 complex contains 3 respiratory subunits (MT-CYB, CYC1 and UQCRFS1), 2 core proteins (UQCRC1 and UQCRC2) and probably 6 low-molecular weight proteins. Requires heme b as cofactor.

It localises to the mitochondrion inner membrane. In terms of biological role, component of the ubiquinol-cytochrome c reductase complex (complex III or cytochrome b-c1 complex) that is part of the mitochondrial respiratory chain. The b-c1 complex mediates electron transfer from ubiquinol to cytochrome c. Contributes to the generation of a proton gradient across the mitochondrial membrane that is then used for ATP synthesis. In Homoroselaps lacteus (Spotted harlequin snake), this protein is Cytochrome b (MT-CYB).